We begin with the raw amino-acid sequence, 220 residues long: 7-cyano-7-deazaguanine synthase (220 aa).

Isoleucine 7–alanine 17 lines the ATP pocket. 4 residues coordinate Zn(2+): cysteine 187, cysteine 195, cysteine 198, and cysteine 201.

This sequence belongs to the QueC family. The cofactor is Zn(2+).

It carries out the reaction 7-carboxy-7-deazaguanine + NH4(+) + ATP = 7-cyano-7-deazaguanine + ADP + phosphate + H2O + H(+). Its pathway is purine metabolism; 7-cyano-7-deazaguanine biosynthesis. Catalyzes the ATP-dependent conversion of 7-carboxy-7-deazaguanine (CDG) to 7-cyano-7-deazaguanine (preQ(0)). The chain is 7-cyano-7-deazaguanine synthase from Campylobacter hominis (strain ATCC BAA-381 / DSM 21671 / CCUG 45161 / LMG 19568 / NCTC 13146 / CH001A).